Here is an 86-residue protein sequence, read N- to C-terminus: MTLYKIVSKPIILLAFFFTRVVFTNEVDGEELFYKPTCHSDTYEIILKKFSSIWILVNTFILLCSFSLFLKYWCFKTLAKETVKGY.

Residues 1 to 29 (MTLYKIVSKPIILLAFFFTRVVFTNEVDG) form the signal peptide. At 30–47 (EELFYKPTCHSDTYEIIL) the chain is on the virion surface side. Residues 48–68 (KKFSSIWILVNTFILLCSFSL) traverse the membrane as a helical segment. The Intravirion portion of the chain corresponds to 69–86 (FLKYWCFKTLAKETVKGY).

The protein belongs to the herpesviridae glycoprotein N family. In terms of assembly, interacts (via N-terminus) with gM (via N-terminus). The gM-gN heterodimer forms the gCII complex.

It is found in the virion membrane. It localises to the host membrane. Its subcellular location is the host Golgi apparatus. The protein localises to the host trans-Golgi network. Its function is as follows. Envelope glycoprotein necessary for proper maturation of gM and modulation of its membrane fusion activity. Also plays a critical role in virion morphogenesis. This Homo sapiens (Human) protein is Envelope glycoprotein N.